Consider the following 347-residue polypeptide: Methionine import ATP-binding protein MetN (347 aa).

Residues 2 to 241 form the ABC transporter domain; sequence IKLEGVSKTY…PATRLGRDFL (240 aa). 38-45 contributes to the ATP binding site; sequence GLSGAGKS.

It belongs to the ABC transporter superfamily. Methionine importer (TC 3.A.1.24) family. As to quaternary structure, the complex is composed of two ATP-binding proteins (MetN), two transmembrane proteins (MetI) and a solute-binding protein (MetQ).

Its subcellular location is the cell inner membrane. The catalysed reaction is L-methionine(out) + ATP + H2O = L-methionine(in) + ADP + phosphate + H(+). The enzyme catalyses D-methionine(out) + ATP + H2O = D-methionine(in) + ADP + phosphate + H(+). Part of the ABC transporter complex MetNIQ involved in methionine import. Responsible for energy coupling to the transport system. The protein is Methionine import ATP-binding protein MetN of Chromohalobacter salexigens (strain ATCC BAA-138 / DSM 3043 / CIP 106854 / NCIMB 13768 / 1H11).